The following is a 218-amino-acid chain: Pyridoxine/pyridoxamine 5'-phosphate oxidase (218 aa).

Residues 12–15 (RLSY) and R70 each bind substrate. FMN-binding positions include 65–70 (RTVLLR), 80–81 (YT), K87, and Q109. Substrate is bound by residues Y127, R131, and S135. FMN contacts are provided by residues 145–146 (QS) and W191. A substrate-binding site is contributed by 197 to 199 (RLH). Residue R201 coordinates FMN.

Belongs to the pyridoxamine 5'-phosphate oxidase family. Homodimer. Requires FMN as cofactor.

The catalysed reaction is pyridoxamine 5'-phosphate + O2 + H2O = pyridoxal 5'-phosphate + H2O2 + NH4(+). It carries out the reaction pyridoxine 5'-phosphate + O2 = pyridoxal 5'-phosphate + H2O2. It functions in the pathway cofactor metabolism; pyridoxal 5'-phosphate salvage; pyridoxal 5'-phosphate from pyridoxamine 5'-phosphate: step 1/1. It participates in cofactor metabolism; pyridoxal 5'-phosphate salvage; pyridoxal 5'-phosphate from pyridoxine 5'-phosphate: step 1/1. In terms of biological role, catalyzes the oxidation of either pyridoxine 5'-phosphate (PNP) or pyridoxamine 5'-phosphate (PMP) into pyridoxal 5'-phosphate (PLP). The chain is Pyridoxine/pyridoxamine 5'-phosphate oxidase from Acinetobacter baumannii (strain SDF).